The chain runs to 492 residues: Adenosylhomocysteinase (492 aa).

The substrate site is built by T68, D153, and E215. An NAD(+)-binding site is contributed by 216–218 (TTT). K245 and D249 together coordinate substrate. Residues N250, 279–284 (GYGDVG), E302, N337, 358–360 (IGH), and N406 contribute to the NAD(+) site.

The protein belongs to the adenosylhomocysteinase family. Requires NAD(+) as cofactor.

It localises to the cytoplasm. It carries out the reaction S-adenosyl-L-homocysteine + H2O = L-homocysteine + adenosine. It participates in amino-acid biosynthesis; L-homocysteine biosynthesis; L-homocysteine from S-adenosyl-L-homocysteine: step 1/1. Functionally, may play a key role in the regulation of the intracellular concentration of adenosylhomocysteine. The sequence is that of Adenosylhomocysteinase from Mycobacterium leprae (strain Br4923).